Reading from the N-terminus, the 495-residue chain is Glycerol kinase (495 aa).

Residue Thr-11 participates in ADP binding. Positions 11, 12, and 13 each coordinate ATP. Thr-11 lines the sn-glycerol 3-phosphate pocket. Arg-15 contacts ADP. Residues Arg-81, Glu-82, Tyr-133, and Asp-242 each contribute to the sn-glycerol 3-phosphate site. Glycerol contacts are provided by Arg-81, Glu-82, Tyr-133, Asp-242, and Gln-243. Residues Thr-264 and Gly-307 each contribute to the ADP site. Residues Thr-264, Gly-307, Gln-311, and Gly-408 each coordinate ATP. Gly-408 is an ADP binding site.

The protein belongs to the FGGY kinase family.

It catalyses the reaction glycerol + ATP = sn-glycerol 3-phosphate + ADP + H(+). Its pathway is polyol metabolism; glycerol degradation via glycerol kinase pathway; sn-glycerol 3-phosphate from glycerol: step 1/1. Its activity is regulated as follows. Inhibited by fructose 1,6-bisphosphate (FBP). Functionally, key enzyme in the regulation of glycerol uptake and metabolism. Catalyzes the phosphorylation of glycerol to yield sn-glycerol 3-phosphate. This chain is Glycerol kinase, found in Geobacter sp. (strain M21).